The chain runs to 126 residues: Glycine cleavage system H protein (126 aa).

The Lipoyl-binding domain occupies 21–103 (TVTVGISDHA…YESGWIARIK (83 aa)). At Lys-62 the chain carries N6-lipoyllysine.

Belongs to the GcvH family. In terms of assembly, the glycine cleavage system is composed of four proteins: P, T, L and H. It depends on (R)-lipoate as a cofactor.

The glycine cleavage system catalyzes the degradation of glycine. The H protein shuttles the methylamine group of glycine from the P protein to the T protein. The chain is Glycine cleavage system H protein from Aliivibrio fischeri (strain ATCC 700601 / ES114) (Vibrio fischeri).